We begin with the raw amino-acid sequence, 284 residues long: Proton-translocating ferredoxin:NAD(+) oxidoreductase complex subunit B (284 aa).

The hydrophobic stretch occupies residues 1-26 (MNTVIMILVVMTIIGLIFGLVLAYVN). Residues 32–92 (EVNPLVDLVE…AEQVAKLTGK (61 aa)) enclose the 4Fe-4S domain. [4Fe-4S] cluster is bound by residues cysteine 49, cysteine 52, cysteine 57, cysteine 75, cysteine 138, cysteine 142, cysteine 148, cysteine 152, cysteine 172, cysteine 175, cysteine 178, cysteine 182, cysteine 217, cysteine 220, cysteine 223, cysteine 227, cysteine 246, cysteine 249, cysteine 254, and cysteine 258. 4Fe-4S ferredoxin-type domains follow at residues 133–162 (GGPKACKYGCLGFGTCVKSCPFGAMAMGSN), 163–192 (GLPIIDTDICTGCGTCVSACPKQVLGFRPV), 206–237 (GGAVRKACSVGCLGCGLCAKNCPNDAIKVENN), and 239–269 (AVVDQSICASCSEATCLAKCPTGAIKAIVSG).

Belongs to the 4Fe4S bacterial-type ferredoxin family. RnfB subfamily. As to quaternary structure, the complex is composed of six subunits: RnfA, RnfB, RnfC, RnfD, RnfE and RnfG. The cofactor is [4Fe-4S] cluster.

It is found in the cell membrane. In terms of biological role, part of a membrane-bound complex that couples electron transfer with translocation of ions across the membrane. Couples electron transfer from reduced ferredoxin to NAD(+) with translocation of H(+) out of the cell. Essential for energy conservation during autotrophic growth. Contributes to ATP synthesis during heterotrophic growth. This is Proton-translocating ferredoxin:NAD(+) oxidoreductase complex subunit B from Clostridium ljungdahlii (strain ATCC 55383 / DSM 13528 / PETC).